A 535-amino-acid polypeptide reads, in one-letter code: NEDD8-activating enzyme E1 regulatory subunit (535 aa).

The interaction with UBA3 stretch occupies residues 332–345 (DMIADSSKFIKLQN).

Belongs to the ubiquitin-activating E1 family. ULA1 subfamily. Heterodimer of UBA3 and NAE1. The complex binds NEDD8 and UBE2M.

It participates in protein modification; protein neddylation. In terms of biological role, regulatory subunit of the dimeric UBA3-NAE1 E1 enzyme. E1 activates NEDD8 by first adenylating its C-terminal glycine residue with ATP, thereafter linking this residue to the side chain of the catalytic cysteine, yielding a NEDD8-UBA3 thioester and free AMP. E1 finally transfers NEDD8 to the catalytic cysteine of UBE2M. The covalent attachment of NEDD8 to target proteins is known as 'neddylation' and the process is involved in the regulation of cell growth, viability and development. The chain is NEDD8-activating enzyme E1 regulatory subunit (NAE1) from Gallus gallus (Chicken).